The chain runs to 274 residues: Putative ABC transporter ATP-binding protein MM_1037 (274 aa).

One can recognise an ABC transporter domain in the interval 2–235 (IRLENVSYCY…PSLKDLGLTP (234 aa)). 35–42 (GRNGSGKS) contributes to the ATP binding site.

This sequence belongs to the ABC transporter superfamily.

The protein localises to the cell membrane. Its function is as follows. Probably part of an ABC transporter complex. Responsible for energy coupling to the transport system. This Methanosarcina mazei (strain ATCC BAA-159 / DSM 3647 / Goe1 / Go1 / JCM 11833 / OCM 88) (Methanosarcina frisia) protein is Putative ABC transporter ATP-binding protein MM_1037.